We begin with the raw amino-acid sequence, 262 residues long: Large ribosomal subunit protein uL5c (262 aa).

A chloroplast-targeting transit peptide spans 1 to 39; sequence MASPSLLQSSASSFHGRFSPLAAPSSARMLSPPLRNVVK.

This sequence belongs to the universal ribosomal protein uL5 family. In terms of assembly, part of the 50S ribosomal subunit; contacts the 5S rRNA.

It localises to the plastid. It is found in the chloroplast. In terms of biological role, binds 5S rRNA, forms part of the central protuberance of the 50S subunit. In Arabidopsis thaliana (Mouse-ear cress), this protein is Large ribosomal subunit protein uL5c (RPL5).